An 80-amino-acid polypeptide reads, in one-letter code: Exodeoxyribonuclease 7 small subunit (80 aa).

This sequence belongs to the XseB family. As to quaternary structure, heterooligomer composed of large and small subunits.

It localises to the cytoplasm. The catalysed reaction is Exonucleolytic cleavage in either 5'- to 3'- or 3'- to 5'-direction to yield nucleoside 5'-phosphates.. Its function is as follows. Bidirectionally degrades single-stranded DNA into large acid-insoluble oligonucleotides, which are then degraded further into small acid-soluble oligonucleotides. The sequence is that of Exodeoxyribonuclease 7 small subunit from Oleidesulfovibrio alaskensis (strain ATCC BAA-1058 / DSM 17464 / G20) (Desulfovibrio alaskensis).